The following is a 713-amino-acid chain: Methionine--tRNA ligase (713 aa).

The short motif at 17 to 27 (PYANGPIHIGH) is the 'HIGH' region element. Residues C149, C152, C162, and C165 each coordinate Zn(2+). The short motif at 345-349 (KLSTS) is the 'KMSKS' region element. An ATP-binding site is contributed by T348. The tract at residues 530-564 (VRTSTPDDDPAGAVGWEDAGAPLLPAGHPIPSGPD) is disordered. In terms of domain architecture, tRNA-binding spans 614–713 (DFTQLDLRAG…TEAEDGSVVR (100 aa)).

It belongs to the class-I aminoacyl-tRNA synthetase family. MetG type 1 subfamily. In terms of assembly, homodimer. Zn(2+) serves as cofactor.

It is found in the cytoplasm. It carries out the reaction tRNA(Met) + L-methionine + ATP = L-methionyl-tRNA(Met) + AMP + diphosphate. Its function is as follows. Is required not only for elongation of protein synthesis but also for the initiation of all mRNA translation through initiator tRNA(fMet) aminoacylation. The sequence is that of Methionine--tRNA ligase from Salinibacter ruber (strain DSM 13855 / M31).